The sequence spans 575 residues: Major outer membrane protein MspA (575 aa).

The first 19 residues, 1 to 19 (MKKALVFFVALAMIGSVFA), serve as a signal peptide directing secretion.

Its subcellular location is the cell outer membrane. Major component of the outer membrane sheath. This Treponema maltophilum protein is Major outer membrane protein MspA (mspA).